We begin with the raw amino-acid sequence, 100 residues long: Small ribosomal subunit protein uS14 (100 aa).

Belongs to the universal ribosomal protein uS14 family. In terms of assembly, part of the 30S ribosomal subunit. Contacts proteins S3 and S10.

In terms of biological role, binds 16S rRNA, required for the assembly of 30S particles and may also be responsible for determining the conformation of the 16S rRNA at the A site. This is Small ribosomal subunit protein uS14 from Nostoc sp. (strain PCC 7120 / SAG 25.82 / UTEX 2576).